The primary structure comprises 195 residues: Imidazole glycerol phosphate synthase subunit HisH (195 aa).

The Glutamine amidotransferase type-1 domain maps to methionine 1–glutamine 193. The active-site Nucleophile is cysteine 78. Catalysis depends on residues histidine 168 and glutamate 170.

Heterodimer of HisH and HisF.

The protein localises to the cytoplasm. The enzyme catalyses 5-[(5-phospho-1-deoxy-D-ribulos-1-ylimino)methylamino]-1-(5-phospho-beta-D-ribosyl)imidazole-4-carboxamide + L-glutamine = D-erythro-1-(imidazol-4-yl)glycerol 3-phosphate + 5-amino-1-(5-phospho-beta-D-ribosyl)imidazole-4-carboxamide + L-glutamate + H(+). It carries out the reaction L-glutamine + H2O = L-glutamate + NH4(+). The protein operates within amino-acid biosynthesis; L-histidine biosynthesis; L-histidine from 5-phospho-alpha-D-ribose 1-diphosphate: step 5/9. Functionally, IGPS catalyzes the conversion of PRFAR and glutamine to IGP, AICAR and glutamate. The HisH subunit catalyzes the hydrolysis of glutamine to glutamate and ammonia as part of the synthesis of IGP and AICAR. The resulting ammonia molecule is channeled to the active site of HisF. The protein is Imidazole glycerol phosphate synthase subunit HisH of Exiguobacterium sibiricum (strain DSM 17290 / CCUG 55495 / CIP 109462 / JCM 13490 / 255-15).